We begin with the raw amino-acid sequence, 60 residues long: Homeobox protein engrailed-like A (60 aa).

The segment at residues 1–41 (ADQLARLRAEFQANRYLTEERRQNLARELSLNEAQIKIWFQ) is a DNA-binding region (homeobox).

It belongs to the engrailed homeobox family.

Its subcellular location is the nucleus. This is Homeobox protein engrailed-like A from Myxine glutinosa (Atlantic hagfish).